The following is a 173-amino-acid chain: Alpha-crystallin A chain (173 aa).

Met1 is subject to N-acetylmethionine. The segment at 1 to 63 (MDIAIQHPWF…RSVLDSGISE (63 aa)) is required for complex formation with BFSP1 and BFSP2. The residue at position 6 (Gln6) is a Deamidated glutamine; partial. Ser45 is subject to Phosphoserine. Gln50 bears the Deamidated glutamine; partial mark. The region spanning 52–162 (VFRSVLDSGI…GHSERAIPVS (111 aa)) is the sHSP domain. 2 positions are modified to N6-acetyllysine: Lys70 and Lys99. His100 contributes to the Zn(2+) binding site. A Deamidated asparagine; partial modification is found at Asn101. Residues Glu102 and His107 each contribute to the Zn(2+) site. Ser122 bears the Phosphoserine mark. Asn123 carries the deamidated asparagine; partial modification. Residues 144 to 173 (PKVPSGVDAGHSERAIPVSREEKPSSAPSS) form a disordered region. Over residues 153–167 (GHSERAIPVSREEKP) the composition is skewed to basic and acidic residues. Residue His154 coordinates Zn(2+). An O-linked (GlcNAc) serine glycan is attached at Ser162.

This sequence belongs to the small heat shock protein (HSP20) family. As to quaternary structure, heteromer composed of three CRYAA and one CRYAB subunits. Inter-subunit bridging via zinc ions enhances stability, which is crucial as there is no protein turn over in the lens. Can also form homodimers and homotetramers (dimers of dimers) which serve as the building blocks of homooligomers. Within homooligomers, the zinc-binding motif is created from residues of 3 different molecules. His-100 and Glu-102 from one molecule are ligands of the zinc ion, and His-107 and His-154 residues from additional molecules complete the site with tetrahedral coordination geometry. Part of a complex required for lens intermediate filament formation composed of BFSP1, BFSP2 and CRYAA. Acetylation at Lys-70 may increase chaperone activity. In terms of processing, undergoes age-dependent proteolytical cleavage at the C-terminus.

It is found in the cytoplasm. The protein resides in the nucleus. Contributes to the transparency and refractive index of the lens. Acts as a chaperone, preventing aggregation of various proteins under a wide range of stress conditions. Required for the correct formation of lens intermediate filaments as part of a complex composed of BFSP1, BFSP2 and CRYAA. This is Alpha-crystallin A chain (CRYAA) from Halichoerus grypus (Gray seal).